The chain runs to 639 residues: Alpha-dioxygenase 1 (639 aa).

His-163 functions as the Proton acceptor in the catalytic mechanism. Residue Asp-164 coordinates Ca(2+). His-168 contributes to the heme b binding site. Ca(2+)-binding residues include Thr-216, Trp-218, Asp-220, and Ser-222. Residues His-389, Arg-486, and Arg-490 each coordinate heme b.

It belongs to the peroxidase family. In terms of assembly, forms monomers in solution. The cofactor is heme b. It depends on Ca(2+) as a cofactor. As to expression, expressed in roots (epiderm), mature flowers (e.g. anthers) and senescing leaves.

Its subcellular location is the lipid droplet. The catalysed reaction is a 1,2-saturated fatty acid + O2 = a (2R)-2-hydroperoxy fatty acid. It catalyses the reaction (9Z,12Z,15Z)-octadecatrienoate + O2 = (R)-2-hydroperoxy-(9Z,12Z,15Z)-octadecatrienoate. It carries out the reaction hexadecanoate + O2 = (2R)-2-hydroperoxyhexadecanoate. The enzyme catalyses (9Z,12Z)-octadecadienoate + O2 = (2R,9Z,12Z)-2-hydroperoxyoctadecadienoate. The catalysed reaction is (9Z)-octadecenoate + O2 = (2R,9Z)-2-hydroperoxyoctadecenoate. Functionally, alpha-dioxygenase that catalyzes the primary oxygenation step of a variety of 14-20 carbon fatty acids, containing up to three unsaturated bonds, into their corresponding 2R-hydroperoxides. Involved in the production of oxylipins that function in cell signaling, wound healing, and protection from infection. Mediates protection against oxidative stress and cell death, probably by generating some lipid-derived molecules. Promotes local and systemic plant defense in a salicylic acid (SA)-dependent manner, including the establishment of systemic acquired resistance (SAR) in response to incompatible interaction. Involved in a negative regulation of abscisic acid (ABA)-mediated signaling pathway. This is Alpha-dioxygenase 1 from Arabidopsis thaliana (Mouse-ear cress).